A 384-amino-acid polypeptide reads, in one-letter code: Glucans biosynthesis protein C (384 aa).

10 consecutive transmembrane segments (helical) span residues 17–37, 54–74, 91–111, 140–160, 173–193, 212–232, 240–260, 274–294, 311–331, and 338–358; these read AWLM…THSW, FIHA…SYML, VGIP…ILLQ, LWFL…FTWF, AISL…YAAI, FIVM…LAFI, FTTP…AYLL, TESV…FSLG, ASLF…AYIT, and LIGF…LYEI.

This sequence belongs to the acyltransferase 3 family. OpgC subfamily.

It localises to the cell membrane. It functions in the pathway glycan metabolism; osmoregulated periplasmic glucan (OPG) biosynthesis. Functionally, necessary for the succinyl substitution of periplasmic glucans. Could catalyze the transfer of succinyl residues from the cytoplasmic side of the membrane to the nascent glucan backbones on the periplasmic side of the membrane. This chain is Glucans biosynthesis protein C, found in Salmonella agona (strain SL483).